The sequence spans 166 residues: Lutropin subunit beta (166 aa).

An N-terminal signal peptide occupies residues 1–21 (MGGAQVLLLLTLLGTPLVTHG). Intrachain disulfides connect Cys56/Cys104, Cys70/Cys119, Cys73/Cys157, Cys81/Cys135, Cys85/Cys137, and Cys140/Cys147. A glycan (N-linked (GlcNAc...) asparagine) is linked at Asn60.

The protein belongs to the glycoprotein hormones subunit beta family. As to quaternary structure, heterodimer of a common alpha chain and a unique beta chain which confers biological specificity to thyrotropin, lutropin, follitropin and gonadotropin.

The protein localises to the secreted. Its function is as follows. Promotes spermatogenesis and ovulation by stimulating the testes and ovaries to synthesize steroids. In Coturnix japonica (Japanese quail), this protein is Lutropin subunit beta (LHB).